The chain runs to 162 residues: Nucleotide-binding protein AnaeK_0101 (162 aa).

This sequence belongs to the YajQ family.

Its function is as follows. Nucleotide-binding protein. The sequence is that of Nucleotide-binding protein AnaeK_0101 from Anaeromyxobacter sp. (strain K).